An 82-amino-acid polypeptide reads, in one-letter code: MAKNNSTPQKLVITGIKGYQRFISPLLGSNCRFTPSCSAYATEAINRFGVIKGGWLASKRILRCHPLNDGGEDPVPPIKKSK.

This sequence belongs to the UPF0161 family.

It is found in the cell inner membrane. In terms of biological role, could be involved in insertion of integral membrane proteins into the membrane. This is Putative membrane protein insertion efficiency factor from Colwellia psychrerythraea (strain 34H / ATCC BAA-681) (Vibrio psychroerythus).